Reading from the N-terminus, the 224-residue chain is Protein LURP-one-related 1 (224 aa).

The segment at 1-23 (MQQPYEYRYPQGTGPSAPPPPPK) is disordered.

The protein belongs to the LOR family.

Functionally, might be related to the phospholipid scramblase and tubby-like superfamily of membrane tethered transcription factors. The chain is Protein LURP-one-related 1 from Arabidopsis thaliana (Mouse-ear cress).